A 251-amino-acid polypeptide reads, in one-letter code: Aquaporin (251 aa).

Over 1–11 (MAKEALKTLQS) the chain is Cytoplasmic. The helical transmembrane segment at 12-32 (MFGEMVASFVFGFAVYSAILG) threads the bilayer. At 33–42 (SSISQSSADK) the chain is on the extracellular side. Residues 43 to 63 (VIVGLTVGFSGIGVIYSFCDV) form a helical membrane-spanning segment. Over 64-86 (TIAHFNPAITLAAILTSKIDVLQ) the chain is Cytoplasmic. The NPA signature appears at 69–71 (NPA). A helical membrane pass occupies residues 87-107 (GLGYMLAQYIGFMLAVCALLV). The Extracellular segment spans residues 108-133 (CSPVEYKETLDTIRPGPTDFGATSLN). A helical membrane pass occupies residues 134–154 (VFFAEFFLTAIFVHIVFATAV). Topologically, residues 155–179 (NPYKPKVDTEGKFVDPDEKEPVDRR) are cytoplasmic. A helical membrane pass occupies residues 180-200 (ITAPLCIGLTLGFLAFMGLAS). Topologically, residues 201 to 224 (SGGAFNPGLTFAPMAMSNTWSHFW) are extracellular. Positions 206-208 (NPG) match the NPG motif. A helical transmembrane segment spans residues 225–245 (IYLGGQYLGGLTGGLLQVLVL). Residues 246 to 251 (YKLSSD) are Cytoplasmic-facing.

The protein belongs to the MIP/aquaporin (TC 1.A.8) family.

The protein resides in the cell membrane. In terms of biological role, water channel required to facilitate the transport of water across membranes. Involved in osmotolerance. The polypeptide is Aquaporin (AQP) (Encephalitozoon intestinalis (Microsporidian parasite)).